Reading from the N-terminus, the 154-residue chain is MESTIILIIILTASVLGRANSVALATCFLLILKLLNADKFIFPYLQENGLFLGLVILIASILIPIADGKVSYISIRNVFTSWLGIFALLVSLFTTYLSGLGMNYLTIQGHSEIMPALILGAVIAAAFLGGVPVGPMITSGLIALGLKLFNKIGS.

4 helical membrane-spanning segments follow: residues 5 to 25 (IILIIILTASVLGRANSVALA), 48 to 68 (NGLFLGLVILIASILIPIADG), 82 to 102 (WLGIFALLVSLFTTYLSGLGM), and 113 to 133 (IMPALILGAVIAAAFLGGVPV).

It belongs to the UPF0756 family.

The protein localises to the cell membrane. In Clostridium kluyveri (strain NBRC 12016), this protein is UPF0756 membrane protein CKR_1028.